The following is a 633-amino-acid chain: uncharacterized protein (633 aa).

The tract at residues 1–188 is disordered; that stretch reads MNNRGGFSHP…GQSSFYNSSY (188 aa). Composition is skewed to low complexity over residues 32–80 and 104–148; these read GQPQ…GGNN and NNGN…TNSR. Residues 152 to 178 show a composition bias toward gly residues; the sequence is RGGSSRGGSSRGGNSGSSRGGSRGGYR. A coiled-coil region spans residues 580 to 607; sequence KSKNWTVDQASDELKKLSKNLRLLVSKH. Residues 611–633 form a disordered region; the sequence is TKFQPPSADHTTQFEQDDEEEEN.

This is an uncharacterized protein from Dictyostelium discoideum (Social amoeba).